A 505-amino-acid polypeptide reads, in one-letter code: Forkhead box protein O4 (505 aa).

Polar residues predominate over residues Met1–Thr10. Disordered stretches follow at residues Met1–Ala100 and Ser176–Asn246. Phosphothreonine; by PKB/AKT1 is present on Thr32. The segment covering Leu54–Ser64 has biased composition (basic and acidic residues). A DNA-binding region (fork-head) is located at residues Ala100–Gly188. A Phosphoserine; by PKB/AKT1 modification is found at Ser197. Basic residues predominate over residues Leu205–Pro216. Ser262 bears the Phosphoserine; by PKB/AKT1 mark.

Interacts with CREBBP/CBP, CTNNB1, MYOCD, SIRT1, SRF and YWHAZ. Acetylated by CREBBP/CBP and deacetylated by SIRT1. Binding of YWHAZ inhibits DNA-binding. Interacts with USP7; the interaction is enhanced in presence of hydrogen peroxide and occurs independently of TP53. Interacts with NLK, and this inhibits monoubiquitination and transcriptional activity. Interacts with FOXK1; the interaction inhibits MEF2C transactivation activity. Acetylation by CREBBP/CBP, which is induced by peroxidase stress, inhibits transcriptional activity. Deacetylation by SIRT1 is NAD-dependent and stimulates transcriptional activity. In terms of processing, phosphorylation by PKB/AKT1 inhibits transcriptional activity and is responsible for cytoplasmic localization. May be phosphorylated at multiple sites by NLK. Post-translationally, monoubiquitinated; monoubiquitination is induced by oxidative stress and reduced by deacetylase inhibitors; results in its relocalization to the nucleus and its increased transcriptional activity. Deubiquitinated by USP7; deubiquitination is induced by oxidative stress; enhances its interaction with USP7 and consequently, deubiquitination; increases its translocation to the cytoplasm and inhibits its transcriptional activity. Hydrogene-peroxide-induced ubiquitination and USP7-mediated deubiquitination have no major effect on its protein stability. As to expression, heart, brain, placenta, lung, liver, skeletal muscle, kidney and pancreas. Isoform zeta is most abundant in the liver, kidney, and pancreas.

The protein localises to the cytoplasm. It is found in the nucleus. In terms of biological role, transcription factor involved in the regulation of the insulin signaling pathway. Binds to insulin-response elements (IREs) and can activate transcription of IGFBP1. Down-regulates expression of HIF1A and suppresses hypoxia-induced transcriptional activation of HIF1A-modulated genes. Also involved in negative regulation of the cell cycle. Involved in increased proteasome activity in embryonic stem cells (ESCs) by activating expression of PSMD11 in ESCs, leading to enhanced assembly of the 26S proteasome, followed by higher proteasome activity. This Homo sapiens (Human) protein is Forkhead box protein O4 (FOXO4).